The following is a 249-amino-acid chain: Histone H1 (249 aa).

Low complexity-rich tracts occupy residues 1-19 (MSDS…QTAS) and 27-43 (KKPA…TTAP). 2 disordered regions span residues 1–53 (MSDS…QQMV) and 105–249 (QTKG…ATKK). One can recognise an H15 domain in the interval 45-119 (THPPTQQMVD…GASGSFKLSA (75 aa)). Over residues 121-134 (SKKEPKPKVSSVEK) the composition is skewed to basic and acidic residues. Residues 146-158 (AKKKTISATKKPK) show a composition bias toward basic residues. Residues 173–190 (KSVDKKKAEKAKAKDAKK) are compositionally biased toward basic and acidic residues. Residues 195–233 (KAKPTTAKAKSSAAKPKTPKPKTTSAKPKKVVAAASPKK) show a composition bias toward low complexity. The span at 234–249 (AAAKKPKAKTASATKK) shows a compositional bias: basic residues.

It belongs to the histone H1/H5 family.

It localises to the nucleus. Its subcellular location is the chromosome. Histones H1 are necessary for the condensation of nucleosome chains into higher-order structures. The protein is Histone H1 (His1) of Drosophila hydei (Fruit fly).